The sequence spans 68 residues: Copper transport protein ATOX1 (68 aa).

The 63-residue stretch at 1 to 63 folds into the HMA domain; sequence MPKHEFSVDM…TLKKTGKTVS (63 aa). Cu cation-binding residues include cysteine 12 and cysteine 15. At serine 47 the chain carries Phosphoserine. At lysine 60 the chain carries N6-acetyllysine.

It belongs to the ATX1 family. As to quaternary structure, homodimer. Interacts with ATP7B. Interacts with ATP7A. Interacts (via dimer form) with SLC31A1 (via C-terminal domain); this interaction improves ATOX1 stability and controls intracellular Cu(I) levels. In terms of tissue distribution, ubiquitous.

In terms of biological role, binds and deliver cytosolic copper to the copper ATPase proteins. May be important in cellular antioxidant defense. This Homo sapiens (Human) protein is Copper transport protein ATOX1.